Reading from the N-terminus, the 444-residue chain is CCA-adding enzyme (444 aa).

ATP contacts are provided by Ser-57 and Arg-60. CTP-binding residues include Ser-57 and Arg-60. Mg(2+) is bound by residues Asp-69, Asp-71, and Asp-124. Positions 147, 168, and 177 each coordinate ATP. CTP contacts are provided by His-147, Lys-168, and Tyr-177.

The protein belongs to the tRNA nucleotidyltransferase/poly(A) polymerase family. Archaeal CCA-adding enzyme subfamily. As to quaternary structure, homodimer. Mg(2+) is required as a cofactor.

It catalyses the reaction a tRNA precursor + 2 CTP + ATP = a tRNA with a 3' CCA end + 3 diphosphate. The enzyme catalyses a tRNA with a 3' CCA end + 2 CTP + ATP = a tRNA with a 3' CCACCA end + 3 diphosphate. Its function is as follows. Catalyzes the addition and repair of the essential 3'-terminal CCA sequence in tRNAs without using a nucleic acid template. Adds these three nucleotides in the order of C, C, and A to the tRNA nucleotide-73, using CTP and ATP as substrates and producing inorganic pyrophosphate. tRNA 3'-terminal CCA addition is required both for tRNA processing and repair. Also involved in tRNA surveillance by mediating tandem CCA addition to generate a CCACCA at the 3' terminus of unstable tRNAs. While stable tRNAs receive only 3'-terminal CCA, unstable tRNAs are marked with CCACCA and rapidly degraded. The polypeptide is CCA-adding enzyme (Methanococcus maripaludis (strain DSM 14266 / JCM 13030 / NBRC 101832 / S2 / LL)).